The sequence spans 662 residues: MDKKKLIEELVEELNKYAYEYYVLGNSSVTDKDYDKKYYELVDLEKETGYKLPYSPTQRVGDVILPEFKKYTHKARLWSLDKAQTLEEIREWHNRNVKFLEEYNRTSDEELPPLKYILTKKFDGLTINLSYDENGVLVTGATRGTGAIGEDVTAQVKTIKSIPLKIDCHDFLEIHGEAIMTTEAFEKYNSEADTPLKNLRNGAAGALRNLNVAETAKRNLSAFFYDVGYKEGAPFKTYMEMLNFIKTKGFPMDDYIRECTTLDEIQKEIDYIRDIRFDLNYDIDGLVIAIDDIRTRELLGYTVKFPKWAIAYKFEAQEATTKLLDVEWNVGRSGRVSPTAILEPVELAGVTVKRATLNNMDDIARKGVRLGAEVFVRRSNDVIPEIMGVVPESLEGTKEIEEPKVCPACGAHLVHEGVHIYCENTLGCKPQMVKTIVHFAGREAMNIAGFSEKTAEQLFEKLDIRDISDLYKLEYEKLLDLDKFGPKKAQNLLDAIEKSKDCTLEAFLYSLGIPNVGVKTAKDLVKRFESLENLEKATFEELVSVQDVGDIVARSIIEFFKEERTLKVINELLSLGVNPHYEKKEVLESPFMGKTVVVTGTLENYSRTSIKEKLESLGAKVSGSVSKKTDFVIAGEAAGSKYDKAKSLGVTILSEEEFENMI.

NAD(+)-binding positions include 31-35 (DKDYD) and 79-80 (SL). The N6-AMP-lysine intermediate role is filled by Lys-121. NAD(+) contacts are provided by Arg-143, Glu-177, and Lys-313. Zn(2+) contacts are provided by Cys-406, Cys-409, Cys-422, and Cys-428. Positions 586–662 (VLESPFMGKT…LSEEEFENMI (77 aa)) constitute a BRCT domain.

This sequence belongs to the NAD-dependent DNA ligase family. LigA subfamily. Mg(2+) serves as cofactor. Requires Mn(2+) as cofactor.

It carries out the reaction NAD(+) + (deoxyribonucleotide)n-3'-hydroxyl + 5'-phospho-(deoxyribonucleotide)m = (deoxyribonucleotide)n+m + AMP + beta-nicotinamide D-nucleotide.. Functionally, DNA ligase that catalyzes the formation of phosphodiester linkages between 5'-phosphoryl and 3'-hydroxyl groups in double-stranded DNA using NAD as a coenzyme and as the energy source for the reaction. It is essential for DNA replication and repair of damaged DNA. The chain is DNA ligase from Clostridium perfringens (strain ATCC 13124 / DSM 756 / JCM 1290 / NCIMB 6125 / NCTC 8237 / Type A).